The sequence spans 306 residues: Tyrosine--tRNA ligase (306 aa).

2 residues coordinate L-tyrosine: Tyr32 and Glu36. The 'HIGH' region signature appears at 37-45; sequence PSGKIHLGH. Positions 151-158 are tyrosine; it reads YPIMQVND. Gln173 is a binding site for L-tyrosine. The 'KMSKS' region signature appears at 204-208; it reads KMSSS. Ser207 lines the ATP pocket. 2 interaction with t-RNA regions span residues 228–231 and 283–288; these read KAYC and HPMDLK.

It belongs to the class-I aminoacyl-tRNA synthetase family. TyrS type 3 subfamily. Homodimer.

It localises to the cytoplasm. It carries out the reaction tRNA(Tyr) + L-tyrosine + ATP = L-tyrosyl-tRNA(Tyr) + AMP + diphosphate + H(+). Catalyzes the attachment of tyrosine to tRNA(Tyr) in a two-step reaction: tyrosine is first activated by ATP to form Tyr-AMP and then transferred to the acceptor end of tRNA(Tyr). The protein is Tyrosine--tRNA ligase (tyrS) of Methanocaldococcus jannaschii (strain ATCC 43067 / DSM 2661 / JAL-1 / JCM 10045 / NBRC 100440) (Methanococcus jannaschii).